A 467-amino-acid polypeptide reads, in one-letter code: Glutamate--tRNA ligase (467 aa).

Residues Pro9–Gly19 carry the 'HIGH' region motif. A 'KMSKS' region motif is present at residues Lys237–Arg241. Lys240 contacts ATP.

Belongs to the class-I aminoacyl-tRNA synthetase family. Glutamate--tRNA ligase type 1 subfamily. Monomer.

Its subcellular location is the cytoplasm. It catalyses the reaction tRNA(Glu) + L-glutamate + ATP = L-glutamyl-tRNA(Glu) + AMP + diphosphate. Catalyzes the attachment of glutamate to tRNA(Glu) in a two-step reaction: glutamate is first activated by ATP to form Glu-AMP and then transferred to the acceptor end of tRNA(Glu). The chain is Glutamate--tRNA ligase from Xylella fastidiosa (strain M12).